The chain runs to 539 residues: Phosphoenolpyruvate carboxykinase (ATP) (539 aa).

Residues Arg64, Tyr206, and Lys212 each contribute to the substrate site. ATP contacts are provided by residues Lys212, His231, and Gly247–Thr255. 2 residues coordinate Mn(2+): Lys212 and His231. Position 268 (Asp268) interacts with Mn(2+). ATP contacts are provided by residues Glu296, Arg332, Arg448–Ile449, and Thr454. Arg332 serves as a coordination point for substrate.

This sequence belongs to the phosphoenolpyruvate carboxykinase (ATP) family. Monomer. The cofactor is Mn(2+).

Its subcellular location is the cytoplasm. The enzyme catalyses oxaloacetate + ATP = phosphoenolpyruvate + ADP + CO2. It participates in carbohydrate biosynthesis; gluconeogenesis. Functionally, involved in the gluconeogenesis. Catalyzes the conversion of oxaloacetate (OAA) to phosphoenolpyruvate (PEP) through direct phosphoryl transfer between the nucleoside triphosphate and OAA. In Hamiltonella defensa subsp. Acyrthosiphon pisum (strain 5AT), this protein is Phosphoenolpyruvate carboxykinase (ATP).